The sequence spans 481 residues: ATP synthase subunit beta, chloroplastic (481 aa).

162–169 (GGAGVGKT) contributes to the ATP binding site.

It belongs to the ATPase alpha/beta chains family. As to quaternary structure, F-type ATPases have 2 components, F(1) - the catalytic core - and F(0) - the membrane proton channel. F(1) has five subunits: alpha(3), beta(3), gamma(1), delta(1), epsilon(1). F(0) has four main subunits: a(1), b(1), b'(1) and c(10-14). The alpha and beta chains form an alternating ring which encloses part of the gamma chain. F(1) is attached to F(0) by a central stalk formed by the gamma and epsilon chains, while a peripheral stalk is formed by the delta, b and b' chains.

It is found in the plastid. It localises to the chloroplast thylakoid membrane. It catalyses the reaction ATP + H2O + 4 H(+)(in) = ADP + phosphate + 5 H(+)(out). Functionally, f(1)F(0) ATP synthase produces ATP from ADP in the presence of a proton or sodium gradient. F-type ATPases consist of two structural domains, F(1) containing the extramembraneous catalytic core and F(0) containing the membrane proton channel, linked together by a central stalk and a peripheral stalk. During catalysis, ATP synthesis in the catalytic domain of F(1) is coupled via a rotary mechanism of the central stalk subunits to proton translocation. In terms of biological role, produces ATP from ADP in the presence of a proton gradient across the membrane. The catalytic sites are hosted primarily by the beta subunits. The sequence is that of ATP synthase subunit beta, chloroplastic from Chlamydomonas reinhardtii (Chlamydomonas smithii).